A 275-amino-acid polypeptide reads, in one-letter code: Nuclear egress protein 2 (275 aa).

Residues 1-251 (MAGLGKPYTG…GLKHLRIGPP (251 aa)) lie on the Perinuclear space side of the membrane. An interaction with NEC1 region spans residues 137 to 181 (KGRLGLDARPMMASMWISCFVRMPRVQLAFRFMGPEDAGRTRRIL). Residues 252 to 272 (ALVLAAGLVLGAAIWWVVGAG) traverse the membrane as a helical segment. Residues 273–275 (ARL) lie on the Nuclear side of the membrane.

Belongs to the herpesviridae NEC2 protein family. Forms a heterohexameric complex with NEC1. Interacts with glycoprotein D; this interaction recruits glycoprotein D and glycoprotein M to the inner nuclear membrane. Post-translationally, phosphorylated by viral kinase US3.

The protein resides in the host nucleus inner membrane. Plays an essential role in virion nuclear egress, the first step of virion release from infected cell. Within the host nucleus, NEC1 interacts with the newly formed capsid through the vertexes and directs it to the inner nuclear membrane by associating with NEC2. Induces the budding of the capsid at the inner nuclear membrane as well as its envelopment into the perinuclear space. There, the NEC1/NEC2 complex promotes the fusion of the enveloped capsid with the outer nuclear membrane and the subsequent release of the viral capsid into the cytoplasm where it will reach the secondary budding sites in the host Golgi or trans-Golgi network. This Homo sapiens (Human) protein is Nuclear egress protein 2.